Consider the following 130-residue polypeptide: Keratin-associated protein 12-1 (130 aa).

Tandem repeats lie at residues 10 to 14, 15 to 29, 34 to 38, 40 to 44, 45 to 49, 60 to 64, 85 to 89, 90 to 94, 95 to 99, 104 to 108, 109 to 113, 114 to 118, 119 to 123, and 124 to 128. The interval 10-128 is 14 X 5 AA approximate repeats; sequence CQPSCCVSSS…CKPVTCSNPS (119 aa).

It belongs to the KRTAP type 12 family. Interacts with hair keratins. As to expression, expressed only in the head and back skin of a 3 day old mouse. Not expressed in adult skin.

Its function is as follows. In the hair cortex, hair keratin intermediate filaments are embedded in an interfilamentous matrix, consisting of hair keratin-associated proteins (KRTAP), which are essential for the formation of a rigid and resistant hair shaft through their extensive disulfide bond cross-linking with abundant cysteine residues of hair keratins. The matrix proteins include the high-sulfur and high-glycine-tyrosine keratins. This is Keratin-associated protein 12-1 from Mus musculus (Mouse).